A 434-amino-acid chain; its full sequence is Probable glucuronosyltransferase Os02g0520750 (434 aa).

Over 1–10 (MVGARAGRVP) the chain is Cytoplasmic. A helical; Signal-anchor for type II membrane protein membrane pass occupies residues 11–31 (AAAAAAAAVLIVAACVFSSLA). Residues 32–434 (GAAAAAEVVG…GPVADLKPWK (403 aa)) are Lumenal-facing. Residues Asn160 and Asn421 are each glycosylated (N-linked (GlcNAc...) asparagine).

It belongs to the glycosyltransferase 47 family.

Its subcellular location is the golgi apparatus membrane. In terms of biological role, involved in the synthesis of glucuronoxylan hemicellulose in secondary cell walls. The protein is Probable glucuronosyltransferase Os02g0520750 of Oryza sativa subsp. japonica (Rice).